An 83-amino-acid chain; its full sequence is Large ribosomal subunit protein uL23 (83 aa).

It belongs to the universal ribosomal protein uL23 family. Part of the 50S ribosomal subunit. Contacts protein L29.

In terms of biological role, binds to 23S rRNA. One of the proteins that surrounds the polypeptide exit tunnel on the outside of the ribosome. This is Large ribosomal subunit protein uL23 from Thermoplasma volcanium (strain ATCC 51530 / DSM 4299 / JCM 9571 / NBRC 15438 / GSS1).